The chain runs to 105 residues: Vacuolar ATPase assembly integral membrane protein VMA21 homolog (105 aa).

The tract at residues 1–26 (MSTKNKKAAGGNGGAPKQTRQQSHDS) is disordered. The Cytoplasmic portion of the chain corresponds to 1–36 (MSTKNKKAAGGNGGAPKQTRQQSHDSQDYSSFKTVL). A helical membrane pass occupies residues 37–57 (FYCMLIVFLPVLTFFVLKGFV). At 58–68 (LDQFLDISEVK) the chain is on the lumenal side. A helical transmembrane segment spans residues 69-89 (VNIASAVGAVVALHIALGLYI). Topologically, residues 90-105 (YRAYFGTTGSKASKTD) are cytoplasmic.

Belongs to the VMA21 family.

The protein resides in the endoplasmic reticulum membrane. Its subcellular location is the endoplasmic reticulum-Golgi intermediate compartment membrane. The protein localises to the cytoplasmic vesicle. It localises to the COPII-coated vesicle membrane. Required for the assembly of the V0 complex of the vacuolar ATPase (V-ATPase) in the endoplasmic reticulum. In Drosophila erecta (Fruit fly), this protein is Vacuolar ATPase assembly integral membrane protein VMA21 homolog.